We begin with the raw amino-acid sequence, 422 residues long: Histone deacetylase B (422 aa).

D102 provides a ligand contact to substrate. The Proton acceptor role is filled by H144. G152 lines the substrate pocket. D179, H181, and D268 together coordinate a divalent metal cation. Residue Y307 coordinates substrate. The interval 399-422 (IDFDRDEDSKENMDKRKKKHNDFS) is disordered. Residues 413–422 (KRKKKHNDFS) show a composition bias toward basic residues.

This sequence belongs to the histone deacetylase family. HD type 1 subfamily.

The protein resides in the nucleus. It is found in the cytoplasm. It carries out the reaction N(6)-acetyl-L-lysyl-[histone] + H2O = L-lysyl-[histone] + acetate. With respect to regulation, its activity is inhibited by trichostatin A (TSA), a well known histone deacetylase inhibitor. Cytosolic activity is refractory to inhibition by TSA, while the nuclear activity is inhibited completely. Its function is as follows. Responsible for the deacetylation of lysine residues on the N-terminal part of the core histones (H2A, H2B, H3 and H4). Histone deacetylation plays an important role in transcriptional regulation, cell cycle progression and developmental events. Histone deacetylases act via the formation of large multiprotein complexes. May play a role in the regulation of the timing of gene expression during the development and in the definition aspects of the phenotype that mediate social behavior in genetically heterogeneous groups. This is Histone deacetylase B (hdaB) from Dictyostelium discoideum (Social amoeba).